Consider the following 130-residue polypeptide: Small ribosomal subunit protein uS8 (130 aa).

It belongs to the universal ribosomal protein uS8 family.

It is found in the cytoplasm. The polypeptide is Small ribosomal subunit protein uS8 (RPS15A) (Daucus carota (Wild carrot)).